A 243-amino-acid polypeptide reads, in one-letter code: Ribonuclease PH (243 aa).

Phosphate contacts are provided by residues Arg-91 and Gly-129–Arg-131.

Belongs to the RNase PH family. Homohexameric ring arranged as a trimer of dimers.

It carries out the reaction tRNA(n+1) + phosphate = tRNA(n) + a ribonucleoside 5'-diphosphate. Functionally, phosphorolytic 3'-5' exoribonuclease that plays an important role in tRNA 3'-end maturation. Removes nucleotide residues following the 3'-CCA terminus of tRNAs; can also add nucleotides to the ends of RNA molecules by using nucleoside diphosphates as substrates, but this may not be physiologically important. Probably plays a role in initiation of 16S rRNA degradation (leading to ribosome degradation) during starvation. This Burkholderia mallei (strain NCTC 10247) protein is Ribonuclease PH.